The sequence spans 393 residues: Trehalose import ATP-binding protein SugC (393 aa).

In terms of domain architecture, ABC transporter spans 4–235; the sequence is IVLDHVNKSY…PANLFVAGFI (232 aa). 37–44 serves as a coordination point for ATP; it reads GPSGCGKT. Residues 135–139 carry the Helical C-loop; LSGGQ motif motif; sequence LSGGQ.

The protein belongs to the ABC transporter superfamily. In terms of assembly, monomer. Homodimerizes in the presence of ATP. The complex is composed of two ATP-binding proteins (SugC), two transmembrane proteins (SugA and SugB) and a solute-binding protein (LpqY).

The protein localises to the cell inner membrane. It catalyses the reaction alpha,alpha-trehalose(out) + ATP + H2O = alpha,alpha-trehalose(in) + ADP + phosphate + H(+). Functionally, part of the ABC transporter complex LpqY-SugA-SugB-SugC, which is highly specific for uptake of trehalose. Involved in the recycling of extracellular trehalose released from trehalose-containing molecules synthesized by M.tuberculosis. Trehalose uptake is essential for virulence. Responsible for energy coupling to the transport system. The sequence is that of Trehalose import ATP-binding protein SugC (sugC) from Mycobacterium tuberculosis (strain CDC 1551 / Oshkosh).